Reading from the N-terminus, the 1078-residue chain is Transmembrane protein 132B (1078 aa).

At 1-903 (MFGAASRMDT…LTDLEIGMYA (903 aa)) the chain is on the extracellular side. 3 N-linked (GlcNAc...) asparagine glycosylation sites follow: N343, N366, and N381. A disordered region spans residues 834–887 (RGTPVGQEESTNKSTTPQSPMEGKNKLLKSGGPDAFTSFPTQGKSPDPNNPSDL). Positions 841–852 (EESTNKSTTPQS) are enriched in polar residues. Residues 904-924 (LLCVFCLAILVFLINCVAFAW) traverse the membrane as a helical segment. Topologically, residues 925-1078 (KYRHKRFAVS…DYMESLQDQM (154 aa)) are cytoplasmic.

It belongs to the TMEM132 family.

The protein resides in the membrane. The protein is Transmembrane protein 132B (TMEM132B) of Homo sapiens (Human).